The chain runs to 129 residues: Holo-[acyl-carrier-protein] synthase (129 aa).

Positions 8 and 58 each coordinate Mg(2+).

Belongs to the P-Pant transferase superfamily. AcpS family. Mg(2+) is required as a cofactor.

It is found in the cytoplasm. The enzyme catalyses apo-[ACP] + CoA = holo-[ACP] + adenosine 3',5'-bisphosphate + H(+). Functionally, transfers the 4'-phosphopantetheine moiety from coenzyme A to a Ser of acyl-carrier-protein. This chain is Holo-[acyl-carrier-protein] synthase, found in Geobacillus kaustophilus (strain HTA426).